Here is a 629-residue protein sequence, read N- to C-terminus: tRNA uridine 5-carboxymethylaminomethyl modification enzyme MnmG (629 aa).

13-18 contributes to the FAD binding site; it reads GGGHAG. Position 273 to 287 (273 to 287) interacts with NAD(+); the sequence is GPRYCPSIEDKIHRF.

This sequence belongs to the MnmG family. Homodimer. Heterotetramer of two MnmE and two MnmG subunits. FAD is required as a cofactor.

Its subcellular location is the cytoplasm. Functionally, NAD-binding protein involved in the addition of a carboxymethylaminomethyl (cmnm) group at the wobble position (U34) of certain tRNAs, forming tRNA-cmnm(5)s(2)U34. This chain is tRNA uridine 5-carboxymethylaminomethyl modification enzyme MnmG, found in Shewanella baltica (strain OS155 / ATCC BAA-1091).